The sequence spans 251 residues: uncharacterized protein (251 aa).

4 disordered regions span residues methionine 1–glycine 93, glycine 107–glutamine 152, proline 169–serine 188, and leucine 224–serine 251. The segment covering glutamine 225–proline 234 has biased composition (polar residues).

This is an uncharacterized protein from Homo sapiens (Human).